We begin with the raw amino-acid sequence, 102 residues long: NADH-quinone oxidoreductase subunit K (102 aa).

The next 3 helical transmembrane spans lie at 5-25, 31-51, and 62-82; these read LAHY…GIFL, IILL…FVAF, and VFVF…LAIL.

This sequence belongs to the complex I subunit 4L family. In terms of assembly, NDH-1 is composed of 14 different subunits. Subunits NuoA, H, J, K, L, M, N constitute the membrane sector of the complex.

The protein localises to the cell inner membrane. It catalyses the reaction a quinone + NADH + 5 H(+)(in) = a quinol + NAD(+) + 4 H(+)(out). NDH-1 shuttles electrons from NADH, via FMN and iron-sulfur (Fe-S) centers, to quinones in the respiratory chain. The immediate electron acceptor for the enzyme in this species is believed to be ubiquinone. Couples the redox reaction to proton translocation (for every two electrons transferred, four hydrogen ions are translocated across the cytoplasmic membrane), and thus conserves the redox energy in a proton gradient. The sequence is that of NADH-quinone oxidoreductase subunit K from Bordetella parapertussis (strain 12822 / ATCC BAA-587 / NCTC 13253).